The following is a 137-amino-acid chain: uncharacterized protein (137 aa).

Residues 31-83 (PASPINDKEKDKAGGRLPSGSEPRARAFCEAGADGEQGDPSPADTIKANQGHI) form a disordered region.

This is an uncharacterized protein from Homo sapiens (Human).